The sequence spans 449 residues: Tubulin alpha-1B chain (449 aa).

Glutamine 11 contributes to the GTP binding site. The residue at position 40 (lysine 40) is an N6-acetyllysine. GTP contacts are provided by glutamate 71, serine 140, glycine 144, threonine 145, threonine 179, asparagine 206, and asparagine 228. Glutamate 71 contributes to the Mg(2+) binding site. The active site involves glutamate 254.

It belongs to the tubulin family. Dimer of alpha and beta chains. A typical microtubule is a hollow water-filled tube with an outer diameter of 25 nm and an inner diameter of 15 nM. Alpha-beta heterodimers associate head-to-tail to form protofilaments running lengthwise along the microtubule wall with the beta-tubulin subunit facing the microtubule plus end conferring a structural polarity. Microtubules usually have 13 protofilaments but different protofilament numbers can be found in some organisms and specialized cells. The cofactor is Mg(2+). In terms of processing, acetylation of alpha chains at Lys-40 stabilizes microtubules and affects affinity and processivity of microtubule motors. This modification has a role in multiple cellular functions, ranging from cell motility, cell cycle progression or cell differentiation to intracellular trafficking and signaling.

It is found in the cytoplasm. The protein localises to the cytoskeleton. It localises to the spindle. The protein resides in the nucleus. It carries out the reaction GTP + H2O = GDP + phosphate + H(+). Its function is as follows. Tubulin is the major constituent of microtubules, a cylinder consisting of laterally associated linear protofilaments composed of alpha- and beta-tubulin heterodimers. Microtubules grow by the addition of GTP-tubulin dimers to the microtubule end, where a stabilizing cap forms. Below the cap, tubulin dimers are in GDP-bound state, owing to GTPase activity of alpha-tubulin. The polypeptide is Tubulin alpha-1B chain (ALTBN) (Physarum polycephalum (Slime mold)).